Reading from the N-terminus, the 326-residue chain is N-acetyl-gamma-glutamyl-phosphate reductase (326 aa).

C155 is a catalytic residue.

This sequence belongs to the NAGSA dehydrogenase family. Type 1 subfamily.

It is found in the cytoplasm. It catalyses the reaction N-acetyl-L-glutamate 5-semialdehyde + phosphate + NADP(+) = N-acetyl-L-glutamyl 5-phosphate + NADPH + H(+). It functions in the pathway amino-acid biosynthesis; L-arginine biosynthesis; N(2)-acetyl-L-ornithine from L-glutamate: step 3/4. Its function is as follows. Catalyzes the NADPH-dependent reduction of N-acetyl-5-glutamyl phosphate to yield N-acetyl-L-glutamate 5-semialdehyde. This chain is N-acetyl-gamma-glutamyl-phosphate reductase, found in Shewanella sp. (strain MR-4).